Here is a 447-residue protein sequence, read N- to C-terminus: C4-dicarboxylate transport protein (447 aa).

Helical transmembrane passes span 22-42 (FQVI…PLVG), 52-72 (FINL…VTGI), 90-110 (AYFL…AHVV), 159-179 (GNIL…ASVG), 199-219 (LVHI…AFTI), 232-252 (WLVG…LGVV), 325-347 (LFIA…LLVA), and 366-386 (AATL…ILGV).

The protein belongs to the dicarboxylate/amino acid:cation symporter (DAACS) (TC 2.A.23) family.

The protein resides in the cell inner membrane. Its function is as follows. Responsible for the transport of dicarboxylates such as succinate, fumarate, and malate from the periplasm across the membrane. This Stenotrophomonas maltophilia (strain R551-3) protein is C4-dicarboxylate transport protein.